Reading from the N-terminus, the 168-residue chain is G/U mismatch-specific DNA glycosylase (168 aa).

This sequence belongs to the uracil-DNA glycosylase (UDG) superfamily. TDG/mug family. In terms of assembly, binds DNA as a monomer.

The protein resides in the cytoplasm. The catalysed reaction is Specifically hydrolyzes mismatched double-stranded DNA and polynucleotides, releasing free uracil.. In terms of biological role, excises ethenocytosine and uracil, which can arise by alkylation or deamination of cytosine, respectively, from the corresponding mispairs with guanine in ds-DNA. It is capable of hydrolyzing the carbon-nitrogen bond between the sugar-phosphate backbone of the DNA and the mispaired base. The complementary strand guanine functions in substrate recognition. Required for DNA damage lesion repair in stationary-phase cells. The chain is G/U mismatch-specific DNA glycosylase from Salmonella choleraesuis (strain SC-B67).